A 446-amino-acid polypeptide reads, in one-letter code: UDP-N-acetylmuramoylalanine--D-glutamate ligase (446 aa).

An ATP-binding site is contributed by 112 to 118 (GTNGKST).

This sequence belongs to the MurCDEF family.

Its subcellular location is the cytoplasm. The catalysed reaction is UDP-N-acetyl-alpha-D-muramoyl-L-alanine + D-glutamate + ATP = UDP-N-acetyl-alpha-D-muramoyl-L-alanyl-D-glutamate + ADP + phosphate + H(+). The protein operates within cell wall biogenesis; peptidoglycan biosynthesis. Cell wall formation. Catalyzes the addition of glutamate to the nucleotide precursor UDP-N-acetylmuramoyl-L-alanine (UMA). This chain is UDP-N-acetylmuramoylalanine--D-glutamate ligase, found in Baumannia cicadellinicola subsp. Homalodisca coagulata.